The sequence spans 241 residues: MEMERINDDTIRVTISSDDLNERGVTFLDLLDNHKEIESFFYSVLEEVDTDHQFASNDAVTFQVLPNRNGLELYISKNPTDGMEEAIKSVSKDNAPSNGEMDEVSDFLKRKLAETDSNDKNNDDSSYMSDGNPADLNGYANGVGSTQKSVIELEDFESLPSIAELIKTNSGIESVLYRYHDIYYLELTFFTSENSPETIKNDLAIAYEYGNSTIVSSEVLREHGEVVMDGAALELAKRYFK.

Positions 115–141 (TDSNDKNNDDSSYMSDGNPADLNGYAN) are disordered.

The protein belongs to the MecA family. In terms of assembly, homodimer.

Its function is as follows. Enables the recognition and targeting of unfolded and aggregated proteins to the ClpC protease or to other proteins involved in proteolysis. In Pediococcus pentosaceus (strain ATCC 25745 / CCUG 21536 / LMG 10740 / 183-1w), this protein is Adapter protein MecA.